Here is a 98-residue protein sequence, read N- to C-terminus: Protein S100-A11 (98 aa).

T5 carries the phosphothreonine modification. EF-hand domains lie at 8-44 and 50-85; these read CIES…ELAA and KDPG…LAIA. K22 bears the N6-acetyllysine mark. Residues N26, Q28, E33, D63, N65, D67, Q69, and E74 each contribute to the Ca(2+) site.

It belongs to the S-100 family. As to quaternary structure, homodimer; disulfide-linked. Post-translationally, phosphorylation at Thr-5 significantly suppresses homodimerization and promotes association with NCL/nucleolin which induces nuclear translocation.

Its subcellular location is the cytoplasm. It is found in the nucleus. Functionally, facilitates the differentiation and the cornification of keratinocytes. The sequence is that of Protein S100-A11 (S100a11) from Mus musculus (Mouse).